We begin with the raw amino-acid sequence, 144 residues long: Large ribosomal subunit protein uL13 (144 aa).

The protein belongs to the universal ribosomal protein uL13 family. Part of the 50S ribosomal subunit.

Functionally, this protein is one of the early assembly proteins of the 50S ribosomal subunit, although it is not seen to bind rRNA by itself. It is important during the early stages of 50S assembly. The sequence is that of Large ribosomal subunit protein uL13 from Mycoplasmopsis synoviae (strain 53) (Mycoplasma synoviae).